Here is an 80-residue protein sequence, read N- to C-terminus: MALTCRLRFPVPGFRGRMHRRRGMAGHGLTGGMRRAHHRRRRASHRRMRGGILPLLIPLIAAAIGAVPGIASVALQAQRH.

A propeptide spanning residues 2 to 32 (ALTCRLRFPVPGFRGRMHRRRGMAGHGLTGG) is cleaved from the precursor. The tract at residues 18 to 45 (MHRRRGMAGHGLTGGMRRAHHRRRRASH) is disordered. Positions 34 to 45 (RRAHHRRRRASH) are enriched in basic residues. Residues 52–80 (ILPLLIPLIAAAIGAVPGIASVALQAQRH) constitute a propeptide that is removed on maturation.

The protein belongs to the adenoviridae core protein X family. As to quaternary structure, interacts with the core-capsid bridging protein; this interaction bridges the virus core to the capsid. Cleaved by the viral protease during virion maturation to form the mature protein.

The protein localises to the host nucleus. It localises to the host nucleolus. It is found in the virion. Interacts with the viral DNA and aids in tightly condensing it within the capsid. Cleavage of pre-core protein X may serve to partially relax this structure within the mature virion prior to its entry into the nucleus. This Human adenovirus C serotype 2 (HAdV-2) protein is Pre-core protein X.